The following is a 257-amino-acid chain: NAD-capped RNA hydrolase NudC (257 aa).

Arg69 contributes to the substrate binding site. The Zn(2+) site is built by Cys98 and Cys101. Glu111 is a substrate binding site. 2 residues coordinate Zn(2+): Cys116 and Cys119. A substrate-binding site is contributed by Tyr124. One can recognise a Nudix hydrolase domain in the interval 125–248; it reads PQIAPCIIVA…TVARRLIEDT (124 aa). 3 residues coordinate a divalent metal cation: Ala158, Glu174, and Glu178. The short motif at 159 to 180 is the Nudix box element; sequence GFVEVGETLEQAVAREVMEESG. 192–199 is a substrate binding site; the sequence is QPWPFPQS. Glu219 serves as a coordination point for a divalent metal cation. Ala241 lines the substrate pocket.

This sequence belongs to the Nudix hydrolase family. NudC subfamily. Homodimer. Mg(2+) is required as a cofactor. Requires Mn(2+) as cofactor. Zn(2+) serves as cofactor.

The enzyme catalyses a 5'-end NAD(+)-phospho-ribonucleoside in mRNA + H2O = a 5'-end phospho-adenosine-phospho-ribonucleoside in mRNA + beta-nicotinamide D-ribonucleotide + 2 H(+). The catalysed reaction is NAD(+) + H2O = beta-nicotinamide D-ribonucleotide + AMP + 2 H(+). It catalyses the reaction NADH + H2O = reduced beta-nicotinamide D-ribonucleotide + AMP + 2 H(+). Functionally, mRNA decapping enzyme that specifically removes the nicotinamide adenine dinucleotide (NAD) cap from a subset of mRNAs by hydrolyzing the diphosphate linkage to produce nicotinamide mononucleotide (NMN) and 5' monophosphate mRNA. The NAD-cap is present at the 5'-end of some mRNAs and stabilizes RNA against 5'-processing. Has preference for mRNAs with a 5'-end purine. Catalyzes the hydrolysis of a broad range of dinucleotide pyrophosphates. The polypeptide is NAD-capped RNA hydrolase NudC (Salmonella choleraesuis (strain SC-B67)).